Here is a 493-residue protein sequence, read N- to C-terminus: Ketol-acid reductoisomerase (NADP(+)) (493 aa).

Residues 14 to 208 (LDQLGRCRFM…GGDRAGVLES (195 aa)) enclose the KARI N-terminal Rossmann domain. NADP(+) contacts are provided by residues 45–48 (CGAQ), R68, R76, S78, and 108–110 (DKQ). Residue H132 is part of the active site. G158 contacts NADP(+). KARI C-terminal knotted domains are found at residues 209–345 (SFVA…APKA) and 346–486 (DGIK…MTDM). Mg(2+)-binding residues include D217, E221, E390, and E394. S415 contributes to the substrate binding site.

Belongs to the ketol-acid reductoisomerase family. The cofactor is Mg(2+).

It catalyses the reaction (2R)-2,3-dihydroxy-3-methylbutanoate + NADP(+) = (2S)-2-acetolactate + NADPH + H(+). The enzyme catalyses (2R,3R)-2,3-dihydroxy-3-methylpentanoate + NADP(+) = (S)-2-ethyl-2-hydroxy-3-oxobutanoate + NADPH + H(+). It functions in the pathway amino-acid biosynthesis; L-isoleucine biosynthesis; L-isoleucine from 2-oxobutanoate: step 2/4. Its pathway is amino-acid biosynthesis; L-valine biosynthesis; L-valine from pyruvate: step 2/4. Functionally, involved in the biosynthesis of branched-chain amino acids (BCAA). Catalyzes an alkyl-migration followed by a ketol-acid reduction of (S)-2-acetolactate (S2AL) to yield (R)-2,3-dihydroxy-isovalerate. In the isomerase reaction, S2AL is rearranged via a Mg-dependent methyl migration to produce 3-hydroxy-3-methyl-2-ketobutyrate (HMKB). In the reductase reaction, this 2-ketoacid undergoes a metal-dependent reduction by NADPH to yield (R)-2,3-dihydroxy-isovalerate. The polypeptide is Ketol-acid reductoisomerase (NADP(+)) (Actinobacillus succinogenes (strain ATCC 55618 / DSM 22257 / CCUG 43843 / 130Z)).